A 155-amino-acid polypeptide reads, in one-letter code: 6,7-dimethyl-8-ribityllumazine synthase (155 aa).

Residues Phe-23, 57 to 59 (AYE), and 81 to 83 (AVI) contribute to the 5-amino-6-(D-ribitylamino)uracil site. 86-87 (AT) provides a ligand contact to (2S)-2-hydroxy-3-oxobutyl phosphate. His-89 functions as the Proton donor in the catalytic mechanism. Phe-114 contributes to the 5-amino-6-(D-ribitylamino)uracil binding site. Residue Arg-128 coordinates (2S)-2-hydroxy-3-oxobutyl phosphate.

The protein belongs to the DMRL synthase family.

The enzyme catalyses (2S)-2-hydroxy-3-oxobutyl phosphate + 5-amino-6-(D-ribitylamino)uracil = 6,7-dimethyl-8-(1-D-ribityl)lumazine + phosphate + 2 H2O + H(+). The protein operates within cofactor biosynthesis; riboflavin biosynthesis; riboflavin from 2-hydroxy-3-oxobutyl phosphate and 5-amino-6-(D-ribitylamino)uracil: step 1/2. Functionally, catalyzes the formation of 6,7-dimethyl-8-ribityllumazine by condensation of 5-amino-6-(D-ribitylamino)uracil with 3,4-dihydroxy-2-butanone 4-phosphate. This is the penultimate step in the biosynthesis of riboflavin. The chain is 6,7-dimethyl-8-ribityllumazine synthase from Desulfotalea psychrophila (strain LSv54 / DSM 12343).